The chain runs to 372 residues: uncharacterized protein (372 aa).

A helical transmembrane segment spans residues 224 to 244 (GSTVGVVIGVVIVIFIGFIII). Ser329 bears the Phosphoserine mark.

Its subcellular location is the vacuole membrane. This is an uncharacterized protein from Saccharomyces cerevisiae (strain ATCC 204508 / S288c) (Baker's yeast).